The following is a 341-amino-acid chain: MIELCGLKKSFSGKLALNDINLFIQEGEVFGVIGKSGAGKSTLLRCINILEKPDEGEVVIDGQNLMSLSRKDLALARHKIAMIFQHFNLLNSKTVFDNIALPMRIQGIDEESIKQKIEELLPVVELTDKKDAFPSQLSGGQKQRVAIARALSCSPKVLLCDEATSALDPATTDAILSLLKKINELYGITIVLITHEMDVVKRICQRLSVMVDGKIVETTALSNIFNKPESLARKMLYAQISPELPTCLTRRLADYATEKPLVRLFFQGEEATVPFISQTSRELNMDINILLANIDRFDGVTCGVLVVELTANPLLLEAFINRCEQAGITVEVLGYVLPDGL.

The ABC transporter domain maps to I2–Y237. Residue G34–S41 coordinates ATP.

Belongs to the ABC transporter superfamily. Methionine importer (TC 3.A.1.24) family. As to quaternary structure, the complex is composed of two ATP-binding proteins (MetN), two transmembrane proteins (MetI) and a solute-binding protein (MetQ).

Its subcellular location is the cell inner membrane. It catalyses the reaction L-methionine(out) + ATP + H2O = L-methionine(in) + ADP + phosphate + H(+). The catalysed reaction is D-methionine(out) + ATP + H2O = D-methionine(in) + ADP + phosphate + H(+). Functionally, part of the ABC transporter complex MetNIQ involved in methionine import. Responsible for energy coupling to the transport system. This Legionella pneumophila (strain Lens) protein is Methionine import ATP-binding protein MetN.